The following is a 340-amino-acid chain: Protein RecA (340 aa).

ATP is bound at residue 65-72; it reads GPESGGKT.

This sequence belongs to the RecA family.

It is found in the cytoplasm. In terms of biological role, can catalyze the hydrolysis of ATP in the presence of single-stranded DNA, the ATP-dependent uptake of single-stranded DNA by duplex DNA, and the ATP-dependent hybridization of homologous single-stranded DNAs. It interacts with LexA causing its activation and leading to its autocatalytic cleavage. The sequence is that of Protein RecA from Thermus aquaticus.